The sequence spans 350 residues: Enoyl-[acyl-carrier-protein] reductase, mitochondrial (350 aa).

A mitochondrion-targeting transit peptide spans 1-12; the sequence is MWLGLRLFHRPF. The Proton donor role is filled by tyrosine 68. NADP(+) contacts are provided by residues asparagine 141, 167-170, 190-192, 259-262, 284-286, and lysine 345; these read NSGV, RDR, YGGM, and FWV.

It belongs to the zinc-containing alcohol dehydrogenase family. Quinone oxidoreductase subfamily. In terms of assembly, homodimer. As to expression, expressed in the developing pronephros.

The protein localises to the mitochondrion. The catalysed reaction is a 2,3-saturated acyl-[ACP] + NADP(+) = a (2E)-enoyl-[ACP] + NADPH + H(+). In terms of biological role, catalyzes the NADPH-dependent reduction of trans-2-enoyl thioesters in mitochondrial fatty acid synthesis (fatty acid synthesis type II). Fatty acid chain elongation in mitochondria uses acyl carrier protein (ACP) as an acyl group carrier, but the enzyme accepts both ACP and CoA thioesters as substrates in vitro. May provide the octanoyl chain used for lipoic acid biosynthesis, regulating protein lipoylation and mitochondrial respiratory activity. Involved in iron homeostasis; affecting Fe-S cluster assembly and ceramide metabolism. Required for proper morphology and bioenergetic functions of mitochondria. Required for maintenance of neurons. Functions in pronephros development, regulating late differentiation of all pronephric tubule segments. The protein is Enoyl-[acyl-carrier-protein] reductase, mitochondrial (mecr) of Xenopus tropicalis (Western clawed frog).